A 151-amino-acid polypeptide reads, in one-letter code: Large ribosomal subunit protein bL9 (151 aa).

Belongs to the bacterial ribosomal protein bL9 family.

Its function is as follows. Binds to the 23S rRNA. The polypeptide is Large ribosomal subunit protein bL9 (Dehalococcoides mccartyi (strain ATCC BAA-2266 / KCTC 15142 / 195) (Dehalococcoides ethenogenes (strain 195))).